The following is a 189-amino-acid chain: LLGRLAAIVANEVLLGHKVVVVRCEGINISGNFYRNKLKYLAFLRKRMNTNPSRGPYHFRAPSRIFWRTVRGMLPHKTKRGQAALERLKVFDGVPPPYDKRKRMVVPAALKIVRLKPTRKFALLGRLAHEVGWKYQAITATLEEKRKEKAKIRYAKKKTVTKLSKLAEKNVESTISKYTAVLKQYGVLV.

This sequence belongs to the universal ribosomal protein uL13 family.

This Salmo trutta (Brown trout) protein is Large ribosomal subunit protein uL13 (rpl13a).